A 289-amino-acid polypeptide reads, in one-letter code: Probable endonuclease 4 (289 aa).

Zn(2+) contacts are provided by His74, His115, Glu150, Asp184, His187, His218, Asp231, His233, and Glu263.

The protein belongs to the AP endonuclease 2 family. Requires Zn(2+) as cofactor.

It catalyses the reaction Endonucleolytic cleavage to 5'-phosphooligonucleotide end-products.. Endonuclease IV plays a role in DNA repair. It cleaves phosphodiester bonds at apurinic or apyrimidinic (AP) sites, generating a 3'-hydroxyl group and a 5'-terminal sugar phosphate. This Mycoplasma mycoides subsp. mycoides SC (strain CCUG 32753 / NCTC 10114 / PG1) protein is Probable endonuclease 4.